Here is a 369-residue protein sequence, read N- to C-terminus: UDP-N-acetylglucosamine--N-acetylmuramyl-(pentapeptide) pyrophosphoryl-undecaprenol N-acetylglucosamine transferase (369 aa).

UDP-N-acetyl-alpha-D-glucosamine is bound by residues 10–12, N124, S195, I252, and Q297; that span reads TGG.

This sequence belongs to the glycosyltransferase 28 family. MurG subfamily.

Its subcellular location is the cell membrane. It carries out the reaction Mur2Ac(oyl-L-Ala-gamma-D-Glu-L-Lys-D-Ala-D-Ala)-di-trans,octa-cis-undecaprenyl diphosphate + UDP-N-acetyl-alpha-D-glucosamine = beta-D-GlcNAc-(1-&gt;4)-Mur2Ac(oyl-L-Ala-gamma-D-Glu-L-Lys-D-Ala-D-Ala)-di-trans,octa-cis-undecaprenyl diphosphate + UDP + H(+). It functions in the pathway cell wall biogenesis; peptidoglycan biosynthesis. Functionally, cell wall formation. Catalyzes the transfer of a GlcNAc subunit on undecaprenyl-pyrophosphoryl-MurNAc-pentapeptide (lipid intermediate I) to form undecaprenyl-pyrophosphoryl-MurNAc-(pentapeptide)GlcNAc (lipid intermediate II). This is UDP-N-acetylglucosamine--N-acetylmuramyl-(pentapeptide) pyrophosphoryl-undecaprenol N-acetylglucosamine transferase from Leuconostoc citreum (strain KM20).